A 284-amino-acid polypeptide reads, in one-letter code: BES1/BZR1 homolog protein 3 (284 aa).

2 disordered regions span residues 1–21 (MTSG…RRER) and 85–116 (GSTS…PSPT). Positions 6-88 (RTPTWKEREN…RMDLMNGSTS (83 aa)) are required for DNA-binding. Residues 85–97 (GSTSASPCSSYQH) show a composition bias toward polar residues. Positions 98–114 (SPRASYNPSPSSSSFPS) are enriched in low complexity. Threonine 153 is modified (phosphothreonine).

The protein belongs to the BZR/LAT61 family. Post-translationally, phosphorylated. Phosphorylation increases protein degradation.

This chain is BES1/BZR1 homolog protein 3 (BEH3), found in Arabidopsis thaliana (Mouse-ear cress).